We begin with the raw amino-acid sequence, 258 residues long: tRNA pseudouridine synthase A (258 aa).

Residue aspartate 54 is the Nucleophile of the active site. Tyrosine 112 provides a ligand contact to substrate.

The protein belongs to the tRNA pseudouridine synthase TruA family. In terms of assembly, homodimer.

It carries out the reaction uridine(38/39/40) in tRNA = pseudouridine(38/39/40) in tRNA. Functionally, formation of pseudouridine at positions 38, 39 and 40 in the anticodon stem and loop of transfer RNAs. The polypeptide is tRNA pseudouridine synthase A (Geobacillus kaustophilus (strain HTA426)).